A 357-amino-acid polypeptide reads, in one-letter code: 4-hydroxy-3-methylbut-2-en-1-yl diphosphate synthase (flavodoxin) (357 aa).

[4Fe-4S] cluster contacts are provided by Cys264, Cys267, Cys299, and Glu306.

It belongs to the IspG family. It depends on [4Fe-4S] cluster as a cofactor.

The catalysed reaction is (2E)-4-hydroxy-3-methylbut-2-enyl diphosphate + oxidized [flavodoxin] + H2O + 2 H(+) = 2-C-methyl-D-erythritol 2,4-cyclic diphosphate + reduced [flavodoxin]. Its pathway is isoprenoid biosynthesis; isopentenyl diphosphate biosynthesis via DXP pathway; isopentenyl diphosphate from 1-deoxy-D-xylulose 5-phosphate: step 5/6. Converts 2C-methyl-D-erythritol 2,4-cyclodiphosphate (ME-2,4cPP) into 1-hydroxy-2-methyl-2-(E)-butenyl 4-diphosphate. This Campylobacter jejuni subsp. jejuni serotype O:6 (strain 81116 / NCTC 11828) protein is 4-hydroxy-3-methylbut-2-en-1-yl diphosphate synthase (flavodoxin).